The primary structure comprises 616 residues: DEAD-box ATP-dependent RNA helicase 53, mitochondrial (616 aa).

Residues 1–81 constitute a mitochondrion transit peptide; the sequence is MITTVLRRSL…DFRASMVSQA (81 aa). A Q motif motif is present at residues 104 to 132; it reads LAISELGISPEIVKALSSKGIEKLFPIQK. Residues 135 to 309 form the Helicase ATP-binding domain; the sequence is LEPAMEGRDM…KKYLNNPLTV (175 aa). An ATP-binding site is contributed by 148–155; it reads ARTGTGKT. The short motif at 257-260 is the DEAD box element; that stretch reads DEAD. Residues 338–482 form the Helicase C-terminal domain; sequence IIGPLVTEHA…ELPSIAVERG (145 aa). The disordered stretch occupies residues 489-616; that stretch reads GIGSRSGGSF…FGSNDGKRSY (128 aa). 2 stretches are compositionally biased toward gly residues: residues 492-501 and 508-531; these read SRSGGSFGGG and SFGG…GRSG. Composition is skewed to low complexity over residues 532–568 and 578–587; these read GSSN…SGGR and GSSNNRSSGF.

It belongs to the DEAD box helicase family. DDX21/DDX50 subfamily.

The protein resides in the mitochondrion. It catalyses the reaction ATP + H2O = ADP + phosphate + H(+). The sequence is that of DEAD-box ATP-dependent RNA helicase 53, mitochondrial (RH53) from Arabidopsis thaliana (Mouse-ear cress).